The following is a 257-amino-acid chain: MADS-box transcription factor 1 (257 aa).

The MADS-box domain maps to 1 to 61 (MGRGKVELKR…GRLFEFSSSS (61 aa)). The K-box domain maps to 85–175 (NEINYQEYLK…RKKLQETSAE (91 aa)).

As to quaternary structure, may interact with the K-box of MADS6, MADS14 and MADS15.

It is found in the nucleus. Functionally, probable transcription factor involved in the development of floral organs. Required for the formation of inner floral organs (lodicules, stamens and carpels, or whorls 2, 3 and 4) and the lemma and palea (whorl 1), which are grass floral organs analogous to sepals. May be involved in the control of flowering time. Seems to act as transcriptional activator. May act upstream of the auxin-responsive protein GH3.8. This chain is MADS-box transcription factor 1 (MADS1), found in Oryza sativa subsp. indica (Rice).